A 383-amino-acid chain; its full sequence is 8-amino-7-oxononanoate synthase (383 aa).

Residues Arg27 and Arg34 each coordinate substrate. 114 to 115 (GY) is a binding site for pyridoxal 5'-phosphate. Position 139 (His139) interacts with substrate. Pyridoxal 5'-phosphate is bound by residues Ser187, 212–215 (DDAH), and 232–235 (TLSK). An N6-(pyridoxal phosphate)lysine modification is found at Lys235. Position 344 (Thr344) interacts with substrate.

It belongs to the class-II pyridoxal-phosphate-dependent aminotransferase family. BioF subfamily. As to quaternary structure, homodimer. The cofactor is pyridoxal 5'-phosphate.

The catalysed reaction is 6-carboxyhexanoyl-[ACP] + L-alanine + H(+) = (8S)-8-amino-7-oxononanoate + holo-[ACP] + CO2. It functions in the pathway cofactor biosynthesis; biotin biosynthesis. In terms of biological role, catalyzes the decarboxylative condensation of pimeloyl-[acyl-carrier protein] and L-alanine to produce 8-amino-7-oxononanoate (AON), [acyl-carrier protein], and carbon dioxide. The sequence is that of 8-amino-7-oxononanoate synthase from Methylorubrum extorquens (strain CM4 / NCIMB 13688) (Methylobacterium extorquens).